Here is a 29-residue protein sequence, read N- to C-terminus: Cyclotide mela-7 (29 aa).

The segment at residues 1–29 is a cross-link (cyclopeptide (Gly-Asn)); sequence GLPTCGETCFKGKCYTPGCSCSYPICKKN. 3 disulfide bridges follow: cysteine 5-cysteine 19, cysteine 9-cysteine 21, and cysteine 14-cysteine 26.

In terms of processing, this is a cyclic peptide. Contains 3 disulfide bonds.

Probably participates in a plant defense mechanism (Potential). Binds to and induces leakage in phospholipd membranes, particularly ones containing 1-palmitoyl-2-oleophosphatidylethanolamine (POPE). In vitro, displays cytotoxicity against cultured cells but no hemolytic activity towards fresh erythrocytes. Not active against Gram-negative bacterium E.coli ATCC 25922 or Gram-positive bacterium S.aureus ATCC 25923 up to a concentration of 64 uM. The polypeptide is Cyclotide mela-7 (Melicytus latifolius (Norfolk Island mahoe)).